A 361-amino-acid polypeptide reads, in one-letter code: uncharacterized protein (361 aa).

This is an uncharacterized protein from Escherichia coli (strain K12).